A 1293-amino-acid polypeptide reads, in one-letter code: Period circadian protein homolog 1 (1293 aa).

Residues 1 to 134 (MSGPLEGADG…SSEQSARART (134 aa)) are disordered. The tract at residues 1 to 151 (MSGPLEGADG…LRELKLRLPP (151 aa)) is interaction with BTRC. 2 stretches are compositionally biased toward low complexity: residues 48-57 (NSNGSSGNES) and 64-115 (GASQ…ASSE). Positions 116-132 (QDNPSTSGCSSEQSARA) are enriched in polar residues. T121 is modified (phosphothreonine; by CSNK1E). S122 and S126 each carry phosphoserine; by CSNK1E. Positions 138 to 147 (LMTALRELKL) match the Nuclear export signal 1 motif. PAS domains follow at residues 208–275 (ITSE…PSRL) and 348–414 (YEAP…KILQ). One can recognise a PAC domain in the interval 422–465 (HSPIRFCARNGEYVTMDTSWAGFVHPWSRKVAFVLGRHKVRTAP). The short motif at 489–498 (LSEQIHRLLL) is the Nuclear export signal 2 element. Disordered stretches follow at residues 509-544 (LCGV…PAPV) and 647-697 (TKRK…KEPV). Low complexity-rich tracts occupy residues 513–533 (GPLM…SNGG) and 652–661 (ASSSCTASSA). A required for phosphorylation by CSNK1E region spans residues 596-814 (ELEVAPAPDQ…GLDTSSVAPS (219 aa)). Phosphoserine occurs at positions 660, 662, and 703. 4 disordered regions span residues 748–771 (GLAP…APDA), 808–870 (TSSV…PPAT), 935–1094 (SQAP…SKYF), and 1204–1293 (SVQD…NGTS). Positions 750–768 (APGPAPSPAPSPTVAPDPA) are enriched in pro residues. S814 bears the Phosphoserine mark. The Nuclear localization signal motif lies at 823-839 (IPSGRRHHCRSKAKRSR). Residues 826–843 (GRRHHCRSKAKRSRHHQT) are compositionally biased toward basic residues. 2 stretches are compositionally biased toward pro residues: residues 856–870 (SPVP…PPAT) and 952–962 (PSLPPPPPSPP). Residues 969-982 (LFNSRCSSPLQLNL) are compositionally biased toward polar residues. Phosphoserine occurs at positions 975 and 976. The Nuclear export signal 3 motif lies at 978 to 985 (LQLNLLQL). A compositionally biased stretch (low complexity) spans 1032 to 1058 (LSGSSDLLELLLQEDSRSGTGSAASGS). An LXXLL motif is present at residues 1039–1043 (LELLL). Positions 1059–1073 (LGSGLGSGSGSGSHE) are enriched in gly residues. A compositionally biased stretch (low complexity) spans 1074 to 1091 (GGSTSASITRSSQSSHTS). The CRY binding domain stretch occupies residues 1145-1293 (SRDAASVLKQ…ALPAEENGTS (149 aa)). The span at 1232-1250 (GEGGGVGGGGGGVGGGGGD) shows a compositional bias: gly residues. Residues 1255–1269 (AQTQIGTKGSSSQDS) are compositionally biased toward polar residues.

Homodimer. Component of the circadian core oscillator, which includes the CRY proteins, CLOCK or NPAS2, BMAL1 or BMAL2, CSNK1D and/or CSNK1E, TIMELESS, and the PER proteins. Interacts directly with TIMELESS, PER2, PER3, CRY1 and CRY2. Interacts with BMAL1 and CLOCK. Interacts with GPRASP1. Interacts (phosphorylated) with BTRC and FBXW11; the interactions trigger proteasomal degradation. Interacts with NONO and WDR5. Interacts with SFPQ. Interacts with USP2. Interacts with HNF4A. Post-translationally, phosphorylated on serine residues by CSNK1D, CSNK1E and probably also by CSNK1G2. Phosphorylation by CSNK1D or CSNK1E promotes nuclear location of PER proteins as well as ubiquitination and subsequent degradation. May be dephosphorylated by PP1. Ubiquitinated; requires phosphorylation by CSNK1E and interaction with BTRC and FBXW11. Deubiquitinated by USP2. Expressed in pancreas. In the CNS, highly expressed in the SCN, internal granular layer of granular cells of the olfactory bulb, tuberculum olfactorium, piriform cortex, gyrus dentatus of the hippocampus, cerebellum, pars tuberalis/median eminence, and pituitary, and moderately in the tenia tecta, caudate putamen, accumbens nucleus, spinal cord, superior and inferior colliculus and pineal gland.

It localises to the nucleus. The protein resides in the cytoplasm. Transcriptional repressor which forms a core component of the circadian clock. The circadian clock, an internal time-keeping system, regulates various physiological processes through the generation of approximately 24 hour circadian rhythms in gene expression, which are translated into rhythms in metabolism and behavior. It is derived from the Latin roots 'circa' (about) and 'diem' (day) and acts as an important regulator of a wide array of physiological functions including metabolism, sleep, body temperature, blood pressure, endocrine, immune, cardiovascular, and renal function. Consists of two major components: the central clock, residing in the suprachiasmatic nucleus (SCN) of the brain, and the peripheral clocks that are present in nearly every tissue and organ system. Both the central and peripheral clocks can be reset by environmental cues, also known as Zeitgebers (German for 'timegivers'). The predominant Zeitgeber for the central clock is light, which is sensed by retina and signals directly to the SCN. The central clock entrains the peripheral clocks through neuronal and hormonal signals, body temperature and feeding-related cues, aligning all clocks with the external light/dark cycle. Circadian rhythms allow an organism to achieve temporal homeostasis with its environment at the molecular level by regulating gene expression to create a peak of protein expression once every 24 hours to control when a particular physiological process is most active with respect to the solar day. Transcription and translation of core clock components (CLOCK, NPAS2, BMAL1, BMAL2, PER1, PER2, PER3, CRY1 and CRY2) plays a critical role in rhythm generation, whereas delays imposed by post-translational modifications (PTMs) are important for determining the period (tau) of the rhythms (tau refers to the period of a rhythm and is the length, in time, of one complete cycle). A diurnal rhythm is synchronized with the day/night cycle, while the ultradian and infradian rhythms have a period shorter and longer than 24 hours, respectively. Disruptions in the circadian rhythms contribute to the pathology of cardiovascular diseases, cancer, metabolic syndromes and aging. A transcription/translation feedback loop (TTFL) forms the core of the molecular circadian clock mechanism. Transcription factors, CLOCK or NPAS2 and BMAL1 or BMAL2, form the positive limb of the feedback loop, act in the form of a heterodimer and activate the transcription of core clock genes and clock-controlled genes (involved in key metabolic processes), harboring E-box elements (5'-CACGTG-3') within their promoters. The core clock genes: PER1/2/3 and CRY1/2 which are transcriptional repressors form the negative limb of the feedback loop and interact with the CLOCK|NPAS2-BMAL1|BMAL2 heterodimer inhibiting its activity and thereby negatively regulating their own expression. This heterodimer also activates nuclear receptors NR1D1/2 and RORA/B/G, which form a second feedback loop and which activate and repress BMAL1 transcription, respectively. Regulates circadian target genes expression at post-transcriptional levels, but may not be required for the repression at transcriptional level. Controls PER2 protein decay. Represses CRY2 preventing its repression on CLOCK/BMAL1 target genes such as FXYD5 and SCNN1A in kidney and PPARA in liver. Besides its involvement in the maintenance of the circadian clock, has an important function in the regulation of several processes. Participates in the repression of glucocorticoid receptor NR3C1/GR-induced transcriptional activity by reducing the association of NR3C1/GR to glucocorticoid response elements (GREs) by BMAL1:CLOCK. Plays a role in the modulation of the neuroinflammatory state via the regulation of inflammatory mediators release, such as CCL2 and IL6. In spinal astrocytes, negatively regulates the MAPK14/p38 and MAPK8/JNK MAPK cascades as well as the subsequent activation of NFkappaB. Coordinately regulates the expression of multiple genes that are involved in the regulation of renal sodium reabsorption. Can act as gene expression activator in a gene and tissue specific manner, in kidney enhances WNK1 and SLC12A3 expression in collaboration with CLOCK. Modulates hair follicle cycling. Represses the CLOCK-BMAL1 induced transcription of BHLHE40/DEC1. This Rattus norvegicus (Rat) protein is Period circadian protein homolog 1.